Reading from the N-terminus, the 543-residue chain is MIENSFKMEMHFKNRWQAASLFLRYPRTVTLCLSGKSGDMDESVNLSTSMGDVEASMLNHNVSFSSTMVTSNGDLSLPKLSVTLSAEEILKLRSGRPKNAVESPHAGVPMETSLAAEEEANGDEEEESVRVVDIEDTLELTSNGNEAKPEDQELAIAPVLQYFQGALVELGRRCWTSSTEAQHYTKGCYWSPDGTCLLVPVHLDGMHVIEMPSDLYSADTVQPARSLTKLQSEVHVPEGGTVYDCVWYPHMNSLQPETCLWLATRQHEPIHMWDAFDGSLRCSYSGYDAVDEVMAAISLAFSHDGEQIYAGYKRCIKIFDTSRPGRFCDDYPVKFAISCIAQTTAHPHTLTCGNWHGYIQHFDLRCSHKQGPLFTLGGHKGGITQLRYGEFGNGEWHLFSGARKCDKILQWDMRNYKQPLVELQRHVDTNQRIQFDLASDSNWLASGDTRGFVNVWDLKKYGDPSVLPLHSDCCNGVALNPAMPILATSSGQFHFTDQSAQGDNVTLNGTETTELPAPADVNQNQKEVLYENAVVMWWCGQTG.

The tract at residues 95-128 is disordered; the sequence is GRPKNAVESPHAGVPMETSLAAEEEANGDEEEES. Positions 116–127 are enriched in acidic residues; that stretch reads AEEEANGDEEEE. WD repeat units lie at residues 237–283, 291–329, and 378–421; these read PEGG…LRCS, DEVMAAISLAFSHDGEQIYAGYKRCIKIFDTSRPGRFCD, and GHKG…QPLV.

Belongs to the TCAB1 family.

Its subcellular location is the nucleus. The protein resides in the cajal body. In terms of biological role, RNA chaperone that plays a key role in Cajal body formation. Specifically recognizes and binds the Cajal body box (CAB box) present in both small Cajal body RNAs (scaRNAs). Probably acts by mediating localization of scaRNAs to Cajal bodies. The sequence is that of Telomerase Cajal body protein 1 homolog from Drosophila melanogaster (Fruit fly).